The sequence spans 492 residues: 3-octaprenyl-4-hydroxybenzoate carboxy-lyase (492 aa).

N177 lines the Mn(2+) pocket. Prenylated FMN-binding positions include 180–182 (IYR), 194–196 (RWL), and 199–200 (RG). E243 is a Mn(2+) binding site. D292 acts as the Proton donor in catalysis.

It belongs to the UbiD family. Homohexamer. Prenylated FMN is required as a cofactor. The cofactor is Mn(2+).

It is found in the cell membrane. It carries out the reaction a 4-hydroxy-3-(all-trans-polyprenyl)benzoate + H(+) = a 2-(all-trans-polyprenyl)phenol + CO2. Its pathway is cofactor biosynthesis; ubiquinone biosynthesis. Catalyzes the decarboxylation of 3-octaprenyl-4-hydroxy benzoate to 2-octaprenylphenol, an intermediate step in ubiquinone biosynthesis. In Neisseria meningitidis serogroup C / serotype 2a (strain ATCC 700532 / DSM 15464 / FAM18), this protein is 3-octaprenyl-4-hydroxybenzoate carboxy-lyase.